A 490-amino-acid chain; its full sequence is Probable cytosol aminopeptidase (490 aa).

Mn(2+) is bound by residues Lys258 and Asp263. Lys270 is an active-site residue. The Mn(2+) site is built by Asp282, Asp341, and Glu343. Residue Arg345 is part of the active site.

This sequence belongs to the peptidase M17 family. Mn(2+) is required as a cofactor.

The protein localises to the cytoplasm. It carries out the reaction Release of an N-terminal amino acid, Xaa-|-Yaa-, in which Xaa is preferably Leu, but may be other amino acids including Pro although not Arg or Lys, and Yaa may be Pro. Amino acid amides and methyl esters are also readily hydrolyzed, but rates on arylamides are exceedingly low.. It catalyses the reaction Release of an N-terminal amino acid, preferentially leucine, but not glutamic or aspartic acids.. Functionally, presumably involved in the processing and regular turnover of intracellular proteins. Catalyzes the removal of unsubstituted N-terminal amino acids from various peptides. The protein is Probable cytosol aminopeptidase of Microcystis aeruginosa (strain NIES-843 / IAM M-2473).